Consider the following 209-residue polypeptide: Small ribosomal subunit protein uS4 (209 aa).

The 64-residue stretch at 99-162 folds into the S4 RNA-binding domain; that stretch reads RRLDNMVYRL…RKNNKIIEAM (64 aa).

Belongs to the universal ribosomal protein uS4 family. In terms of assembly, part of the 30S ribosomal subunit. Contacts protein S5. The interaction surface between S4 and S5 is involved in control of translational fidelity.

Its function is as follows. One of the primary rRNA binding proteins, it binds directly to 16S rRNA where it nucleates assembly of the body of the 30S subunit. In terms of biological role, with S5 and S12 plays an important role in translational accuracy. This chain is Small ribosomal subunit protein uS4, found in Syntrophus aciditrophicus (strain SB).